We begin with the raw amino-acid sequence, 123 residues long: UPF0482 protein YE2026 (123 aa).

A signal peptide spans 1-31; it reads MKITSLPRLMRVFLPVAVLALPLAWQTAALA. Positions 47–66 are disordered; that stretch reads GNNDPMSKEQARQSQQQWDD.

The protein belongs to the UPF0482 family.

This chain is UPF0482 protein YE2026, found in Yersinia enterocolitica serotype O:8 / biotype 1B (strain NCTC 13174 / 8081).